The primary structure comprises 102 residues: UPF0213 protein Ent638_3592 (102 aa).

The GIY-YIG domain maps to 4–79; that stretch reads VCWFLYLVRT…KQLTKRQKER (76 aa).

The protein belongs to the UPF0213 family.

This Enterobacter sp. (strain 638) protein is UPF0213 protein Ent638_3592.